We begin with the raw amino-acid sequence, 523 residues long: Apoptosis inhibitor 5-B (523 aa).

The tract at residues 1-360 is ARM-like and Heat-like helical repeats; sequence MPTVEELYRN…HQLGRKLPDF (360 aa). The tract at residues 446–523 is disordered; that stretch reads VQKTDSGQKR…RGNRSRGRIY (78 aa). Residues 454–475 carry the Nuclear localization signal motif; that stretch reads KRMSDETSSTSPPKKPVVGPKR. Gly residues predominate over residues 502-515; the sequence is GFQGGRGRGWGGRG.

It belongs to the API5 family. As to quaternary structure, monomer.

The protein resides in the nucleus. May be an antiapoptotic factor. The chain is Apoptosis inhibitor 5-B (api5-b) from Xenopus laevis (African clawed frog).